The primary structure comprises 330 residues: Methionyl-tRNA formyltransferase (330 aa).

A (6S)-5,6,7,8-tetrahydrofolate-binding site is contributed by 121–124 (SLLP).

It belongs to the Fmt family.

The catalysed reaction is L-methionyl-tRNA(fMet) + (6R)-10-formyltetrahydrofolate = N-formyl-L-methionyl-tRNA(fMet) + (6S)-5,6,7,8-tetrahydrofolate + H(+). Its function is as follows. Attaches a formyl group to the free amino group of methionyl-tRNA(fMet). The formyl group appears to play a dual role in the initiator identity of N-formylmethionyl-tRNA by promoting its recognition by IF2 and preventing the misappropriation of this tRNA by the elongation apparatus. The chain is Methionyl-tRNA formyltransferase from Burkholderia cenocepacia (strain ATCC BAA-245 / DSM 16553 / LMG 16656 / NCTC 13227 / J2315 / CF5610) (Burkholderia cepacia (strain J2315)).